An 83-amino-acid polypeptide reads, in one-letter code: Large ribosomal subunit protein bL27 (83 aa).

Residues 1–25 (MAHKKGQGASRNGRDSESKRLGLKV) are disordered.

It belongs to the bacterial ribosomal protein bL27 family.

This Chlamydia muridarum (strain MoPn / Nigg) protein is Large ribosomal subunit protein bL27.